The chain runs to 493 residues: tRNA (uracil-5-)-methyltransferase homolog B (493 aa).

Residues 1 to 14 (MHNPRLFLSRAGFF) constitute a mitochondrion transit peptide. S-adenosyl-L-methionine is bound by residues Q312, E362, and N412. The Nucleophile role is filled by C440. Residue E486 is the Proton acceptor of the active site.

This sequence belongs to the class I-like SAM-binding methyltransferase superfamily. RNA M5U methyltransferase family.

Its subcellular location is the mitochondrion matrix. It carries out the reaction uridine(54) in tRNA + S-adenosyl-L-methionine = 5-methyluridine(54) in tRNA + S-adenosyl-L-homocysteine + H(+). It catalyses the reaction a uridine in 12S rRNA + S-adenosyl-L-methionine = a 5-methyluridine in 12S rRNA + S-adenosyl-L-homocysteine + H(+). In terms of biological role, mitochondrial S-adenosyl-L-methionine-dependent methyltransferase that catalyzes the formation of 5-methyl-uridine in tRNAs and 12S rRNA. Catalyzes the methylation of uridine at position 54 (m5U54) in all tRNAs. Specifically methylates the uridine in position 425 of 12S rRNA (m5U425). Does not affect RNA stability or mitochondrial translation. This chain is tRNA (uracil-5-)-methyltransferase homolog B, found in Mus musculus (Mouse).